The primary structure comprises 282 residues: Putative phosphoenolpyruvate synthase regulatory protein (282 aa).

Gly-162 to Thr-169 serves as a coordination point for ADP.

This sequence belongs to the pyruvate, phosphate/water dikinase regulatory protein family. PSRP subfamily.

The enzyme catalyses [pyruvate, water dikinase] + ADP = [pyruvate, water dikinase]-phosphate + AMP + H(+). It carries out the reaction [pyruvate, water dikinase]-phosphate + phosphate + H(+) = [pyruvate, water dikinase] + diphosphate. Functionally, bifunctional serine/threonine kinase and phosphorylase involved in the regulation of the phosphoenolpyruvate synthase (PEPS) by catalyzing its phosphorylation/dephosphorylation. The chain is Putative phosphoenolpyruvate synthase regulatory protein from Psychrobacter arcticus (strain DSM 17307 / VKM B-2377 / 273-4).